A 282-amino-acid polypeptide reads, in one-letter code: ATP phosphoribosyltransferase (282 aa).

Belongs to the ATP phosphoribosyltransferase family. Long subfamily. Mg(2+) serves as cofactor.

It localises to the cytoplasm. The enzyme catalyses 1-(5-phospho-beta-D-ribosyl)-ATP + diphosphate = 5-phospho-alpha-D-ribose 1-diphosphate + ATP. It functions in the pathway amino-acid biosynthesis; L-histidine biosynthesis; L-histidine from 5-phospho-alpha-D-ribose 1-diphosphate: step 1/9. With respect to regulation, feedback inhibited by histidine. Catalyzes the condensation of ATP and 5-phosphoribose 1-diphosphate to form N'-(5'-phosphoribosyl)-ATP (PR-ATP). Has a crucial role in the pathway because the rate of histidine biosynthesis seems to be controlled primarily by regulation of HisG enzymatic activity. The chain is ATP phosphoribosyltransferase from Halobacterium salinarum (strain ATCC 29341 / DSM 671 / R1).